A 340-amino-acid chain; its full sequence is Protein-arginine kinase (340 aa).

Positions 21 to 242 (VVLSSRIRLA…EQIIMQERVA (222 aa)) constitute a Phosphagen kinase C-terminal domain. ATP is bound by residues 24–28 (SSRIR), histidine 79, arginine 113, 164–168 (RASVM), and 195–200 (RGIYGE).

The protein belongs to the ATP:guanido phosphotransferase family.

The catalysed reaction is L-arginyl-[protein] + ATP = N(omega)-phospho-L-arginyl-[protein] + ADP + H(+). Catalyzes the specific phosphorylation of arginine residues in proteins. This Listeria innocua serovar 6a (strain ATCC BAA-680 / CLIP 11262) protein is Protein-arginine kinase.